We begin with the raw amino-acid sequence, 329 residues long: MSAEASGPAAAEAPSLEVAKPSELEPGSAAYGLKPLTTNSKYVKLNVGGSLHYTTLRTLTGQDTRLKAMFSGRAEVLTDAGGWVLIDRSGRHFGTILNYLRDGSVPLPESTRELGELLGEARHYLVQGLIEDCQLALQQKRENVSPLCLIPTVTSPREEQQLLASTSKPVVKLLHNRSNNKYSYTSTSDDNLLKNIELFDKLALRFHGRLLFLKDVLGDEICCWSFYGQGRKIAEVCCTSIVYATEKKQTKVEFPEARIFEETLNILIYETPRGPDPALLEATGGAAGGGGASRGEDEDNREHRVRRIHVRRHITHDERPHGQQIVFKD.

Residues 1-15 show a composition bias toward low complexity; the sequence is MSAEASGPAAAEAPS. Positions 1–21 are disordered; it reads MSAEASGPAAAEAPSLEVAKP. A BTB domain is found at 41 to 109; that stretch reads KYVKLNVGGS…LRDGSVPLPE (69 aa). The segment at 280–302 is disordered; that stretch reads LEATGGAAGGGGASRGEDEDNRE.

Belongs to the BACURD family. As to quaternary structure, homotetramer; forms a two-fold symmetric tetramer in solution. Interacts with CUL3; interaction is direct and forms a 5:5 heterodecamer. Component of the BCR(KCTD13) E3 ubiquitin ligase complex, at least composed of CUL3, KCTD13/BACURD1 and RBX1. Interacts with RHOA; with a preference for RhoA-GDP. Interacts with POLD2 and PCNA. Interacts with SPRTN.

The protein resides in the nucleus. It functions in the pathway protein modification; protein ubiquitination. Substrate-specific adapter of a BCR (BTB-CUL3-RBX1) E3 ubiquitin-protein ligase complex required for synaptic transmission. The BCR(KCTD13) E3 ubiquitin ligase complex mediates the ubiquitination of RHOA, leading to its degradation by the proteasome, thereby regulating the actin cytoskeleton and promoting synaptic transmission. This Bos taurus (Bovine) protein is BTB/POZ domain-containing adapter for CUL3-mediated RhoA degradation protein 1 (KCTD13).